Consider the following 58-residue polypeptide: Large ribosomal subunit protein uL30 (58 aa).

The protein belongs to the universal ribosomal protein uL30 family. In terms of assembly, part of the 50S ribosomal subunit.

The sequence is that of Large ribosomal subunit protein uL30 from Psychromonas ingrahamii (strain DSM 17664 / CCUG 51855 / 37).